Consider the following 334-residue polypeptide: Chitin synthase export chaperone (334 aa).

Helical transmembrane passes span 49–69 (IIFEGATAVMHIVALVMTVIM), 88–108 (FFYLYMLLSAMSLVIDAGVVP), 123–143 (GFSSAVITCLLINGFVGFQLY), 159–179 (LAAFTISFLVSLATFKSWAGL), 185–205 (VGLFVVLYLLNAIQLFIYVAM), 220–240 (LGDIAFGIFFFVAGQVFLYAF), and 250–270 (HYLDGLFLATVCNLLGVMMVY).

The protein belongs to the CHS7 family. As to quaternary structure, interacts with CHS3.

Its subcellular location is the endoplasmic reticulum membrane. In terms of biological role, chaperone required for the export of the chitin synthase CHS3 from the endoplasmic reticulum. This is Chitin synthase export chaperone (CHS7) from Gibberella zeae (strain ATCC MYA-4620 / CBS 123657 / FGSC 9075 / NRRL 31084 / PH-1) (Wheat head blight fungus).